A 4151-amino-acid chain; its full sequence is MVDQLQHATEALRKALVQVERLKRTNRALLERSSEPIAIVGMSCRFPGGVDSPEGLWQMVADARDVMSEFPTDRGWDLAGLFDPDPDVRHKSYARTGGFVDGVADFDPAFFGISPSEALAMDPQHRMLLELSWEALERAGIDPTGLRGSATGVFAGLIVGGYGMLAEEIEGYRLTGMTSSVASGRVAYVLGLEGPAVSVDTACSSSLVALHMAVGSLRSGECDLALAGGVTVNATPTVFVEFSRHRGLAPDGRCKPYAGRADGVGWSEGGGMLVLQRLSDARRLGHPVLAVVVGSAVNQDGASNGLTAPNGPSQQRVVRAALANAGLSAAEVDVVEGHGTGTTLGDPIEAQALLATYGQDRGEPGEPLWLGSVKSNMGHTQAAAGVAGVIKMVLAMRHELLPATLHVDVPSPHVDWSAGAVELLTAPRVWPAGARTRRAGVSSFGISGTNAHVIIEAVPVVPRREAGWAGPVVPWVVSAKSESALRGQAARLAAYVRGDDGLDVADVGWSLAGRSVFEHRAVVVGGDRDRLLAGLDELAGDQLGGSVVRGTATAAGKTVFVFPGQGSQWLGMGIELLDTAPAFAQQIDACAEAFAEFVDWSLVDVLRGAPGAPGLDRVDVVQPVLFAVMVSLAELWKSVAVHPDAVIGHSQGEIAAAYVAGALSLRDAARVVTLRSKLLAGLAGPGGMVSIACGADQARDLLAPFGDRVSIAVVNGPSAVVVSGEVGALEELIAVCSTKELRTRRIEVDYASHSVEVEAIRGPLAEALSGIEPRSTRTVFFSTVTGNRLDTAGLDADYWYRNVRQTVLFDQAVRNACEQGYRTFIESSPHPALITGVEETFAACTDGDSEAIVVPTLGRGDGGLHRFLLSAASAFVAGVAVNWRGTLDGAGYVELPTYAFDKRRFWLSAEGSGADVSGLGLGASEHPLLGAVVDLPASGGVVLTGRLSPNVQPWLADHAVSDVVLFPGTGFVELAIRAGDEVGCSVLDELTLAAPLLLPATGSVAVQVVVDAGRDSNSRGVSIFSRADAQAGWLLHAEGILRPGSVEPGADLSVWPPAGAVTVDVADGYERLATRGYRYGPAFRGLTAMWARGEEIFAEVRLPEAAGGVGGFGVHPALLDAVLHAVVIAGDPDELALPFAWQGVSLHATGASAVRARIAPAGPSAVSVELADGLGLPVLSVASMVARPVTERQLLAAVSGSGPDRLFEVIWSPASAATSPGPTPAYQIFESVAADQDPVAGSYVRSHQALAAVQSWLTDHESGVLVVATRGAMALPREDVADLAGAAVWGLVRSAQTEHPGRIVLVDSDAATDDAAIAMALATGEPQVVLRGGQVYTARVRGSRAADAILVPPGDGPWRLGLGSAGTFENLRLEPVPNADAPLGPGQVRVAMRAIAANFRDIMITLGMFTHDALLGGEGAGVVVEVGPGVTEFSVGDSVFGFFPDGSGTLVAGDVRLLLPMPADWSYAEAAAISAVFTTAYYAFIHLADVQPGQRVLIHAGTGGVGMAAVQLARHLGLEVFATASKGKWDTLRAMGFDDDHISDSRSLEFEDKFRAATGGRGFDVVLDSLAGEFVDASLRLVAPGGVFLEMGKTDIRDPGVIAQQYPGVRYRAFDLFEPGRPRMHQYMLELATLFGDGVLRPLPVTTFDVRRAPAALRYLSQARHTGKVVMLMPGSWAAGTVLITGGTGMAGSAVARHVVARHGVRNLVLVSRRGPDAPGAAELVAELAAAGAQVQVVACDAADRAALAKVIADIPVQHPLSGVIHTAGALDDAVVMSLTPDRVDVVLRSKVDAAWHLHELTRDLDVSAFVMFSSMAGLVGSSGQANYAAANSFLDALAAHRRAHGLPAISLGWGLWDQASAMTGGLDAADLARLGREGVLALSTAEALELFDTAMIVDEPFLAPARIDLTALRAHAVAVPPMFSDLASAPTRRQVDDSVAAAKSKSALAHRLHGLPEAEQHAVLLGLVRLHIATVLGNITPEAIDPDKAFQDLGFDSLTAVEMRNRLKSATGLSLSPTLIFDYPTPNRLASYIRTELAGLPQEIKHTPAVRTTSEDPIAIVGMACRYPGGVNSPDDMWDMLIQGRDVLSEFPADRGWDLAGLYNPDPDAAGACYTRTGGFVDGVGDFDPAFFGVGPSEALAMDPQHRMLLELSWEALERAGIDPTGLRGSATGVFAGVMTQGYGMFAAEPVEGFRLTGQLSSVASGRVAYVLGLEGPAVSVDTACSSSLVALHMAVGSLRSGECDLALAGGVTVNATPDIFVEFSRWRGLSPDGRCKAFAAAADGTGFSEGGGMLVLQRLSDARRLGHPVLAVVVGSAVNQDGASNGLTAPNGPSQQRVVRAALANAGLSAAEVDVVEGHGTGTTLGDPIEAQALLATYGQDRGEPGEPLWLGSVKSNMGHTQAAAGVAGVIKMVLAMRHELLPATLHVDVPSPHVDWSAGAVELLTAPRVWPAGARTRRAGVSSFGISGTNAHVIIEAVPVVPRREAGWAGPVVPWVVSAKSESALRGQAARLAAYVRGDDGLDVADVGWSLAGRSVFEHRAVVVGGDRDRLLAGLDELAGDQLGGSVVRGTATAAGKTVFVFPGQGSQWLGMGMGLHAGYPVFAEAFNTVVGELDRHLLRPLREVMWGHDENLLNSTEFAQPALFAVEVALFRLLGSWGVRPDFVMGHSIGELSAAHVAGVLSLENAAVLVAARGRLMQALPAGGAMVAVQAAEEEVRPLLSAEVDIAAVNGPASLVISGAQNAVAAVADQLRADGRRVHQLAVSHAFHSPLMDPMIDEFAAVAAGIAIGRPTIGVISNVTGQLAGDDFGSAAYWRRHIRQAVRFADSVRFAQAAGGSRFLEVGPSGGLVASIEESLPDVAVTTMSALRKDRPEPATLTNAVAQGFVTGMDLDWRAVVGEAQFVELPTYAFQRRRFWLSGDGVAADAAGLGLAASEHALLGAVIDLPASGGVVLTGRLSPSVQGWLADHSVAGVTIFPGAGFVELAIRAGDEVGCGVVDELTLAAPLVLPASGSVAVQVVVNGPDESGVRGVSVYSRGDVGTGWVLHAEGALRAGSAEPTADLAMWPPAGAVPVEVADGYQQLAERGYGYGPAFRGLTAMWRRGDEVFAEVALPADAGVSVTGFGVHPVLLDAALHAVVLSAESAERGQGSVLVPFSWQGVSLHAAGASAVRARIAPVGPSAVSIELADGLGLPVLSVASMLARPVTDQQLRAAVSSSGPDRLFEVTWSPQPSAAVEPLPVCAWGTTEDSAAVVFESVPLAGDVVAGVYAATSSVLDVLQSWLTRDGAGVLVVMTRGAVALPGEDVTDLAGAAVWGLVRSAQTEHPGRIVLVDSDAPLDDSALAAVVTTGEPQVLWRRGEVYTARVHGSRAVGGLLVPPSDRPWRLAMSTAGTFENLRLELIPDADAPLGPGQVRVAVSAIAANFRDVMIALGLYPDPDAVMGVEACGVVIETSLNKGSFAVGDRVMGLFPEGTGTVASTDQRLLVKVPAGWSHTAAATTSVVFATAHYALVDLAAARSGQRVLIHAGTGGVGMAAVQLARHLGLEVFATASKGKWDTLRAMGFDDDHISDSRSLEFEDKFRAATGGRGFDVVLDSLAGEFVDASLRLVAPGGVFLEMGKTDIRDPGVIAQQYPGVRYRAFDLFEPGPDRIAQILAELATLFGDGVLRPLPVTTFDVRCAPAALRYLSQARHTGKVVMLMPGSWAAGTVLITGGTGMAGSAVARHVVARHGVRNLVLVSRRGPDAPGAAELVAELAAAGAQVQVVACDAADRAALAKVIADIPVQHPLSGVIHTAGALDDAVVMSLTPDRVDVVLRSKVDAAWHLHELTRDLDVSAFVMFSSMAGLVGSSGQANYAAANSFLDALAAHRRAHGLPAISLGWGLWDQASAMTGGLATVDFKRFARDGIVAMSSADALQLFDTAMIVDEPFMLPAHIDFAALKVKFDGGTLPPMFVDLINAPTRRQVDDSLAAAKSKSALLQRLEGLPEDEQHAVLLDLVRSHIATVLGSASPEAIDPDRAFQELGFDSLTAVEMRNRLKSATGLALSPTLIFDYPNSAALAGYMRRELLGSSPQDTSAVAAGEAELQRIVASIPVKRLRQAGVLDLLLALANETETSGQDPALAPTAEQEIADMDLDDLVNAAFRNDDE.

The stretch at 2–32 (VDQLQHATEALRKALVQVERLKRTNRALLER) forms a coiled coil. Positions 34-457 (SEPIAIVGMS…GTNAHVIIEA (424 aa)) constitute a Ketosynthase family 3 (KS3) 1 domain. 2 module regions span residues 35 to 2038 (EPIA…RTEL) and 2057 to 4070 (DPIA…RREL). Residue C203 is the Acyl-thioester intermediate; for beta-ketoacyl synthase 1 activity of the active site. Catalysis depends on for beta-ketoacyl synthase 1 activity residues H338 and H379. The segment at 559 to 880 (VFVFPGQGSQ…AASAFVAGVA (322 aa)) is acyltransferase 1. Residue S650 is the Acyl-ester intermediate; for acyltransferase 1 activity of the active site. The N-terminal hotdog fold 1 stretch occupies residues 926 to 1048 (HPLLGAVVDL…GILRPGSVEP (123 aa)). The segment at 926–1194 (HPLLGAVVDL…VARPVTERQL (269 aa)) is dehydratase 1. One can recognise a PKS/mFAS DH 1 domain in the interval 926–1195 (HPLLGAVVDL…ARPVTERQLL (270 aa)). H958 acts as the Proton acceptor; for dehydratase activity 1 in catalysis. The segment at 1060 to 1195 (AVTVDVADGY…ARPVTERQLL (136 aa)) is C-terminal hotdog fold 1. Catalysis depends on D1120, which acts as the Proton donor; for dehydratase activity 1. Residues 1366–1671 (GTFENLRLEP…QARHTGKVVM (306 aa)) are enoyl reductase 1. The tract at residues 1680–1858 (GTVLITGGTG…AISLGWGLWD (179 aa)) is beta-ketoacyl reductase 1. The For beta-ketoacyl reductase 1 activity role is filled by Y1828. Residues 1963-2038 (AVLLGLVRLH…RLASYIRTEL (76 aa)) form the Carrier 1 domain. S1998 carries the post-translational modification O-(pantetheine 4'-phosphoryl)serine. One can recognise a Ketosynthase family 3 (KS3) 2 domain in the interval 2056 to 2480 (EDPIAIVGMA…GTNAHVIIEA (425 aa)). The active-site Acyl-thioester intermediate; for beta-ketoacyl synthase 2 activity is the C2226. Active-site for beta-ketoacyl synthase 2 activity residues include H2361 and H2402. Residues 2582–2893 (VFVFPGQGSQ…AVAQGFVTGM (312 aa)) are acyltransferase 2. The Acyl-ester intermediate; for acyltransferase 2 activity role is filled by S2672. The tract at residues 2940 to 3062 (HALLGAVIDL…GALRAGSAEP (123 aa)) is N-terminal hotdog fold 2. The tract at residues 2940-3215 (HALLGAVIDL…ARPVTDQQLR (276 aa)) is dehydratase 2. A PKS/mFAS DH 2 domain is found at 2940-3215 (HALLGAVIDL…ARPVTDQQLR (276 aa)). The Proton acceptor; for dehydratase activity 2 role is filled by H2972. A C-terminal hotdog fold 2 region spans residues 3074-3215 (AVPVEVADGY…ARPVTDQQLR (142 aa)). D3135 (proton donor; for dehydratase activity 2) is an active-site residue. The tract at residues 3395–3701 (GTFENLRLEL…QARHTGKVVM (307 aa)) is enoyl reductase 2. The segment at 3710–3888 (GTVLITGGTG…AISLGWGLWD (179 aa)) is beta-ketoacyl reductase 2. The active-site For beta-ketoacyl reductase 2 activity is Y3858. The 76-residue stretch at 3995–4070 (AVLLDLVRSH…ALAGYMRREL (76 aa)) folds into the Carrier 2 domain. At S4030 the chain carries O-(pantetheine 4'-phosphoryl)serine.

Forms a large supramolecular assembly mediated through specific interactions between the N- and C-terminus linkers.

The enzyme catalyses a medium-chain fatty acyl-CoA + 5 (S)-methylmalonyl-CoA + 5 malonyl-CoA + 22 NADPH + 32 H(+) = a mycoketide-CoA + 10 CO2 + 22 NADP(+) + 10 CoA + 11 H2O. It functions in the pathway lipid metabolism; fatty acid metabolism. In terms of biological role, involved in the synthesis of beta-D-mannosyl phosphomycoketide (MPM), an antigenic mycobacterial polyketide. Binds a fatty acyl-CoA as a starter unit, and extends it by five rounds of alternative additions of malonyl-CoA and methylmalonyl-CoA extender units. Depending on the starter unit, the enzyme forms mycoketide-CoAs of different lengths. Shows preference for small-/medium-chain starter fatty acyl substrates. Uses a hybrid modularly iterative mechanism, by forming a supramolecular assembly to perform repetitive cycles of iterations. The protein is Mycoketide-CoA synthase of Mycobacterium tuberculosis (strain ATCC 25618 / H37Rv).